An 88-amino-acid chain; its full sequence is Small ribosomal subunit protein uS15 (88 aa).

The protein belongs to the universal ribosomal protein uS15 family. Part of the 30S ribosomal subunit. Forms a bridge to the 50S subunit in the 70S ribosome, contacting the 23S rRNA.

One of the primary rRNA binding proteins, it binds directly to 16S rRNA where it helps nucleate assembly of the platform of the 30S subunit by binding and bridging several RNA helices of the 16S rRNA. In terms of biological role, forms an intersubunit bridge (bridge B4) with the 23S rRNA of the 50S subunit in the ribosome. This is Small ribosomal subunit protein uS15 from Verminephrobacter eiseniae (strain EF01-2).